A 336-amino-acid polypeptide reads, in one-letter code: F420-dependent glucose-6-phosphate dehydrogenase (336 aa).

Aspartate 40 lines the coenzyme F420-(gamma-Glu)n pocket. The active-site Proton donor is the histidine 41. Coenzyme F420-(gamma-Glu)n contacts are provided by residues threonine 77 and 108 to 109; that span reads TG. Residue glutamate 110 is the Proton acceptor of the active site. Coenzyme F420-(gamma-Glu)n-binding positions include asparagine 113, 176-177, and 179-180; these read SG and AA. Threonine 194, lysine 197, lysine 258, and arginine 282 together coordinate substrate.

It belongs to the F420-dependent glucose-6-phosphate dehydrogenase family. Homodimer.

It catalyses the reaction oxidized coenzyme F420-(gamma-L-Glu)(n) + D-glucose 6-phosphate + H(+) = 6-phospho-D-glucono-1,5-lactone + reduced coenzyme F420-(gamma-L-Glu)(n). Functionally, catalyzes the coenzyme F420-dependent oxidation of glucose 6-phosphate (G6P) to 6-phosphogluconolactone. The sequence is that of F420-dependent glucose-6-phosphate dehydrogenase from Microbacterium testaceum (strain StLB037).